We begin with the raw amino-acid sequence, 275 residues long: Large ribosomal subunit protein uL2 (275 aa).

Residues 224–257 (AMNPIDHPHGGGEGRTAAGRDPVSPWGTPTKGFR) are disordered.

It belongs to the universal ribosomal protein uL2 family. Part of the 50S ribosomal subunit. Forms a bridge to the 30S subunit in the 70S ribosome.

Its function is as follows. One of the primary rRNA binding proteins. Required for association of the 30S and 50S subunits to form the 70S ribosome, for tRNA binding and peptide bond formation. It has been suggested to have peptidyltransferase activity; this is somewhat controversial. Makes several contacts with the 16S rRNA in the 70S ribosome. The chain is Large ribosomal subunit protein uL2 from Burkholderia mallei (strain NCTC 10247).